Reading from the N-terminus, the 148-residue chain is MVDWTDAERSAIVGLWGKISVDEIGPQALARLLIVSPWTQRHFSTFGNLSTPAAIMGNPAVAKHGKTVMHGLDRAVQNLDDIKNAYTALSVMHSEKLHVDPDNFRLLADCITVCVAAKLGPTVFSADIQEAFQKFLAVVVSALGRQYH.

Positions 3-148 constitute a Globin domain; that stretch reads DWTDAERSAI…VVSALGRQYH (146 aa). Heme b-binding residues include histidine 64 and histidine 93.

This sequence belongs to the globin family. As to quaternary structure, heterotetramer of two alpha chains and two beta chains. As to expression, red blood cells.

Functionally, involved in oxygen transport from gills to the various peripheral tissues. This chain is Hemoglobin subunit beta (hbb), found in Salmo salar (Atlantic salmon).